A 520-amino-acid polypeptide reads, in one-letter code: AarF domain-containing protein kinase 1 (520 aa).

The 308-residue stretch at 148–455 (EFEKTPLGAA…GTHSSSSAFF (308 aa)) folds into the Protein kinase domain. Residues 154–162 (LGAASLAQV) and Lys-176 each bind ATP. Asp-308 acts as the Proton acceptor in catalysis.

The protein belongs to the protein kinase superfamily. ADCK protein kinase family.

Its subcellular location is the mitochondrion. Its function is as follows. Appears to be essential for maintaining mitochondrial cristae formation and mitochondrial function by acting via YME1L1 in a kinase-independent manner to regulate essential mitochondrial structural proteins OPA1 and IMMT. The action of this enzyme is not yet clear. It is not known if it has protein kinase activity and what type of substrate it would phosphorylate (Ser, Thr or Tyr). In Xenopus laevis (African clawed frog), this protein is AarF domain-containing protein kinase 1 (adck1).